Reading from the N-terminus, the 229-residue chain is Synaptogyrin-3 (229 aa).

N-acetylmethionine is present on M1. The 153-residue stretch at 20–172 (FARRPQTLLR…LTVKALQRFR (153 aa)) folds into the MARVEL domain. 4 helical membrane passes run 30–50 (VASW…GYVN), 70–90 (FGVA…LLDV), 105–125 (VLLD…GFCF), and 148–168 (AAIA…VKAL). Polar residues predominate over residues 209–219 (QSPPFTETLDT). The segment at 209–229 (QSPPFTETLDTSPKGYQVPAY) is disordered.

Belongs to the synaptogyrin family. Interacts (via N-terminus) with SLC6A3 (via N-terminus). May interact with VMAT2. As to expression, expressed in brain and placenta.

The protein localises to the cytoplasmic vesicle. The protein resides in the secretory vesicle. It is found in the synaptic vesicle membrane. It localises to the synapse. In terms of biological role, may play a role in regulated exocytosis. May indirectly regulate the activity of the plasma membrane dopamine transporter SLC6A3 and thereby regulate dopamine transport back from the synaptic cleft into the presynaptic terminal. The protein is Synaptogyrin-3 of Homo sapiens (Human).